The primary structure comprises 210 residues: Kalata-B2 (210 aa).

Positions 1 to 22 (MAKFTNCLVLSLLLAAFVGAFG) are cleaved as a signal peptide. A propeptide spanning residues 23 to 66 (AEFSEADKATLVNDIAENIQKEILGEVKTSETVLTMFLKEMQLK) is cleaved from the precursor. A cross-link (cyclopeptide (Gly-Asp)) is located at residues 67 to 95 (GLPVCGETCFGGTCNTPGCSCTWPICTRD). 3 disulfide bridges follow: C71–C85, C75–C87, and C80–C92. Residues 96-120 (SLPMRAGGKTSETTLHMFLKEMQLK) constitute a propeptide that is removed on maturation. Positions 121–149 (GLPVCGETCFGGTCNTPGCSCTWPICTRD) form a cross-link, cyclopeptide (Gly-Asp). Cystine bridges form between C125-C139, C129-C141, and C134-C146. The propeptide occupies 150 to 174 (SLPMSAGGKTSETTLHMFLKEMQLK). The cyclopeptide (Gly-Asp) cross-link spans 175-203 (GLPVCGETCFGGTCNTPGCSCTWPICTRD). Cystine bridges form between C179–C193, C183–C195, and C188–C200. A propeptide spanning residues 204-210 (SLPLVAA) is cleaved from the precursor.

The protein belongs to the cyclotide family. Moebius subfamily. Kalata-B2 is a cyclic peptide which occurs in three forms: with unmodified Trp, with Trp oxidized to form N-formylkynurenine and with Trp oxidized to form kynurenine. Oxidation is enhanced by exposure to sunlight.

In terms of biological role, probably participates in a plant defense mechanism. Inhibitory effect on the growth and development of larvae from Helicoverpa punctigera. Has hemolytic activity. The sequence is that of Kalata-B2 (OAK4) from Oldenlandia affinis.